The following is a 339-amino-acid chain: tRNA (cytidine(56)-2'-O)-methyltransferase (339 aa).

S-adenosyl-L-methionine-binding positions include Leu-79 and 105-109 (GSEKV). One can recognise an HD domain in the interval 188 to 295 (LIEHVKAVEG…VAQADNLFAG (108 aa)).

This sequence belongs to the aTrm56 family. Homodimer.

The protein localises to the cytoplasm. It catalyses the reaction cytidine(56) in tRNA + S-adenosyl-L-methionine = 2'-O-methylcytidine(56) in tRNA + S-adenosyl-L-homocysteine + H(+). Its function is as follows. Specifically catalyzes the AdoMet-dependent 2'-O-ribose methylation of cytidine at position 56 in tRNAs. In Thermoplasma acidophilum (strain ATCC 25905 / DSM 1728 / JCM 9062 / NBRC 15155 / AMRC-C165), this protein is tRNA (cytidine(56)-2'-O)-methyltransferase.